We begin with the raw amino-acid sequence, 132 residues long: Agouti-signaling protein (132 aa).

Residues 1 to 22 (MDVTRLLLATLLVFLCFFTAYS) form the signal peptide. Asn-39 is a glycosylation site (N-linked (GlcNAc...) asparagine). Residues 62–88 (ISRKEAEKKRSSKKEASMKKVARPRTP) are disordered. The segment covering 63–79 (SRKEAEKKRSSKKEASM) has biased composition (basic and acidic residues). 5 disulfides stabilise this stretch: Cys-93-Cys-108, Cys-100-Cys-114, Cys-107-Cys-125, Cys-111-Cys-132, and Cys-116-Cys-123. The region spanning 93 to 132 (CVATRDSCKPPAPACCDPCASCQCRFFRSACSCRVLSLNC) is the Agouti domain.

It localises to the secreted. Its function is as follows. Involved in the regulation of melanogenesis. The binding of ASP to MC1R precludes alpha-MSH initiated signaling and thus blocks production of cAMP, leading to a down-regulation of eumelanogenesis (brown/black pigment) and thus increasing synthesis of pheomelanin (yellow/red pigment). The polypeptide is Agouti-signaling protein (ASIP) (Macaca radiata (Bonnet macaque)).